Here is a 951-residue protein sequence, read N- to C-terminus: 5'-3' exoribonuclease 2 (951 aa).

The CCHC-type zinc finger occupies 262 to 278 (PCALCNQFGHEVKDCEG). N6-acetyllysine is present on Lys-286. The disordered stretch occupies residues 408 to 508 (KDDEDSFRRR…SDSEPEPEDN (101 aa)). A compositionally biased stretch (basic residues) spans 416 to 426 (RRQKEKRKRMK). At Thr-439 the chain carries Phosphothreonine. 2 stretches are compositionally biased toward polar residues: residues 445 to 458 (SRNSPGCQVASNPR) and 467 to 485 (QRNSSPSISPNTSFASDGS). Phosphoserine occurs at positions 448, 471, 473, 475, 482, 487, 499, 501, and 678. An asymmetric dimethylarginine; alternate mark is found at Arg-824, Arg-847, and Arg-851. Omega-N-methylarginine; alternate occurs at positions 824, 847, and 851. Asymmetric dimethylarginine is present on Arg-880. Arg-883 is subject to Asymmetric dimethylarginine; alternate. Arg-883 is modified (omega-N-methylarginine; alternate). Arg-895 is subject to Omega-N-methylarginine. The segment at 907-951 (NQYQMLGGPGGYPPRRDDHRGGRQGYPREGRKYPLPPPSGRYSWN) is disordered. Positions 920-938 (PRRDDHRGGRQGYPREGRK) are enriched in basic and acidic residues. Arg-947 bears the Asymmetric dimethylarginine; alternate mark. Arg-947 carries the post-translational modification Omega-N-methylarginine; alternate.

Belongs to the 5'-3' exonuclease family. XRN2/RAT1 subfamily. Interacts with POLR2A and SMN1/SMN2. Interacts with CDKN2AIP and NKRF. Interacts with CDKN2AIPNL; the interaction is direct. Interacts with TRIM71 (via NHL repeats) in an RNA-dependent manner. Interacts with DHX34; the interaction is RNA-independent. Expressed in the spleen, testis, heart, brain, lung, liver, skeletal muscle, and kidney.

It localises to the nucleus. It is found in the nucleolus. Its function is as follows. Possesses 5'-&gt;3' exoribonuclease activity. May promote the termination of transcription by RNA polymerase II. During transcription termination, cleavage at the polyadenylation site liberates a 5' fragment which is subsequently processed to form the mature mRNA and a 3' fragment which remains attached to the elongating polymerase. The processive degradation of this 3' fragment by this protein may promote termination of transcription. Binds to RNA polymerase II (RNAp II) transcription termination R-loops formed by G-rich pause sites. This Mus musculus (Mouse) protein is 5'-3' exoribonuclease 2 (Xrn2).